Consider the following 424-residue polypeptide: MSDTSLEKGNEGPTAEAPKVAPPTVPDGGLQAWLTVAGASVALFVSFGWVNCIALFQSEYQTNQLKGYSSSDVSWITSMEFFFMLSTSPVSGRLFDSYGPHVPIAIGSFLHVFGLMMASLSTKYYQLMLSQSVVSGIGSSLIFTPAMTAPQTWFRQKRGIVGGLTVAGSSLGGVVFPLMVQHLLPQVGFGWTMRICAFMILGLLVFANVTISSNFEHKPRPFSVIHYIGPLRDTNFVLLCVASFFMYWGIFIPFDYIVVEAIHYGMSTQMAWSLVPILNGASFFGRTVPNYIADKAGRFNVMIVMTTLSAILVLALWLPARGNGALITFAALFGITSGAIIGLGPVLIVQISPMSELGYRVGTVLAFAAVGTLTSPPIGGAIAASDGGSYTYTCVFSGVSFLIGTLGLAALRVRLSGWGLTTKI.

The segment covering 1–10 (MSDTSLEKGN) has biased composition (basic and acidic residues). A disordered region spans residues 1 to 23 (MSDTSLEKGNEGPTAEAPKVAPP). 5 helical membrane passes run 36–56 (VAGASVALFVSFGWVNCIALF), 102–122 (VPIAIGSFLHVFGLMMASLST), 127–147 (LMLSQSVVSGIGSSLIFTPAM), 160–180 (IVGGLTVAGSSLGGVVFPLMV), and 187–207 (VGFGWTMRICAFMILGLLVFA). A glycan (N-linked (GlcNAc...) asparagine) is linked at Asn208. A run of 6 helical transmembrane segments spans residues 239 to 259 (LCVASFFMYWGIFIPFDYIVV), 265 to 285 (GMSTQMAWSLVPILNGASFFG), 299 to 319 (FNVMIVMTTLSAILVLALWLP), 329 to 349 (FAALFGITSGAIIGLGPVLIV), 364 to 384 (VLAFAAVGTLTSPPIGGAIAA), and 391 to 411 (TYTCVFSGVSFLIGTLGLAAL).

Belongs to the major facilitator superfamily. Monocarboxylate porter (TC 2.A.1.13) family.

The protein resides in the membrane. MFS-type transporter; part of the gene cluster that mediates the biosynthesis of oxopyrrolidines, polyketide-amino acid hybrid compounds with feature structures of tetramic acid. In Penicillium oxalicum (strain 114-2 / CGMCC 5302) (Penicillium decumbens), this protein is MFS-type transporter opdF.